Here is a 245-residue protein sequence, read N- to C-terminus: Thiopurine S-methyltransferase (245 aa).

29-40 serves as a coordination point for S-adenosyl-L-methionine; sequence WREKWVDGKIGF. Phenylalanine 40 provides a ligand contact to substrate. Lysine 58 is subject to N6-acetyllysine. 3 residues coordinate S-adenosyl-L-methionine: leucine 69, glutamate 90, and arginine 152.

The protein belongs to the class I-like SAM-binding methyltransferase superfamily. TPMT family. As to quaternary structure, monomer.

It is found in the cytoplasm. The catalysed reaction is S-adenosyl-L-methionine + a thiopurine = S-adenosyl-L-homocysteine + a thiopurine S-methylether.. The chain is Thiopurine S-methyltransferase (TPMT) from Panthera leo (Lion).